Reading from the N-terminus, the 210-residue chain is Pyridoxine/pyridoxamine 5'-phosphate oxidase (210 aa).

Substrate-binding positions include 7-10 (REDY) and K65. FMN-binding positions include 60 to 65 (RMVLLK), 75 to 76 (FT), R81, K82, and Q104. Substrate contacts are provided by Y122, R126, and S130. Residues 139–140 (QS) and W183 each bind FMN. Position 189–191 (189–191 (RLH)) interacts with substrate. R193 contacts FMN.

This sequence belongs to the pyridoxamine 5'-phosphate oxidase family. As to quaternary structure, homodimer. FMN is required as a cofactor.

It carries out the reaction pyridoxamine 5'-phosphate + O2 + H2O = pyridoxal 5'-phosphate + H2O2 + NH4(+). The enzyme catalyses pyridoxine 5'-phosphate + O2 = pyridoxal 5'-phosphate + H2O2. It participates in cofactor metabolism; pyridoxal 5'-phosphate salvage; pyridoxal 5'-phosphate from pyridoxamine 5'-phosphate: step 1/1. It functions in the pathway cofactor metabolism; pyridoxal 5'-phosphate salvage; pyridoxal 5'-phosphate from pyridoxine 5'-phosphate: step 1/1. Functionally, catalyzes the oxidation of either pyridoxine 5'-phosphate (PNP) or pyridoxamine 5'-phosphate (PMP) into pyridoxal 5'-phosphate (PLP). This Neisseria gonorrhoeae (strain ATCC 700825 / FA 1090) protein is Pyridoxine/pyridoxamine 5'-phosphate oxidase.